A 382-amino-acid chain; its full sequence is Galactokinase (382 aa).

Position 34 to 37 (34 to 37 (EHTD)) interacts with substrate. 124 to 130 (GAGLSSS) is an ATP binding site. Mg(2+) is bound by residues serine 130 and glutamate 162. Aspartate 174 (proton acceptor) is an active-site residue. Tyrosine 223 contributes to the substrate binding site.

It belongs to the GHMP kinase family. GalK subfamily.

It localises to the cytoplasm. It carries out the reaction alpha-D-galactose + ATP = alpha-D-galactose 1-phosphate + ADP + H(+). Its pathway is carbohydrate metabolism; galactose metabolism. In terms of biological role, catalyzes the transfer of the gamma-phosphate of ATP to D-galactose to form alpha-D-galactose-1-phosphate (Gal-1-P). The sequence is that of Galactokinase from Shigella flexneri.